Here is a 69-residue protein sequence, read N- to C-terminus: uncharacterized protein (69 aa).

This is an uncharacterized protein from Sinorhizobium fredii (strain NBRC 101917 / NGR234).